We begin with the raw amino-acid sequence, 199 residues long: Small ribosomal subunit protein eS1 (199 aa).

The protein belongs to the eukaryotic ribosomal protein eS1 family.

This chain is Small ribosomal subunit protein eS1, found in Pyrococcus abyssi (strain GE5 / Orsay).